The following is a 175-amino-acid chain: Bcl-2-related protein A1 (175 aa).

Belongs to the Bcl-2 family. Interacts directly with BCL2L11/BIM, BAK1, BID, BMF and BBC3. Interacts directly with PMAIP1. Interacts with BOP. Interacts with ING4. Interacts with UBQLN4.

The protein resides in the cytoplasm. Its function is as follows. Retards apoptosis induced by IL-3 deprivation. May function in the response of hemopoietic cells to external signals and in maintaining endothelial survival during infection. Can inhibit apoptosis induced by serum starvation in the mammary epithelial cell line HC11. The polypeptide is Bcl-2-related protein A1 (BCL2A1) (Bos taurus (Bovine)).